The chain runs to 284 residues: Trimeric intracellular cation channel type B (284 aa).

The Lumenal portion of the chain corresponds to 1-15; it reads MESFSELSLQFSQLS. The chain crosses the membrane as a helical span at residues 16 to 32; that stretch reads MFPFFETAHYLTSVMSA. The Cytoplasmic segment spans residues 33-44; that stretch reads REQAGAVDVASR. The chain crosses the membrane as a helical span at residues 45–68; that stretch reads SPLASWFSSMLYCFGGGILSSILL. The Lumenal segment spans residues 69 to 79; the sequence is AEPPVGILSNT. A helical transmembrane segment spans residues 80–99; sequence TSIILASAVWYMVYYFPYDL. At 100–102 the chain is on the cytoplasmic side; sequence FYN. Residues 103–121 form a helical membrane-spanning segment; the sequence is CFFFLPIRLILAGMKEVTR. A 1,2-diacyl-sn-glycero-3-phospho-(1D-myo-inositol-4,5-bisphosphate)-binding residues include Lys-117 and Arg-121. The Lumenal portion of the chain corresponds to 122–139; sequence TWKILSGVAHAHSHYKDA. A helical membrane pass occupies residues 140-157; it reads MLVMITIGWARGAGGGLI. Residues 158–178 are Cytoplasmic-facing; that stretch reads SNFEQLVRGVWKPESNEFLKM. A helical membrane pass occupies residues 179-196; the sequence is SYPVKVTLIGAVLFTLQH. At 197-204 the chain is on the lumenal side; it reads GQYLPISR. Residues 205-225 form a helical membrane-spanning segment; it reads HNLMFIYTLFLILIKVTMMLT. The Cytoplasmic portion of the chain corresponds to 226–284; the sequence is RSTASPFLPLETSLQHILFSRQQIPAEVRESPSSSGDKGKPSKKTLDKDSGEQDNKKDN. Residues 250-284 are disordered; that stretch reads PAEVRESPSSSGDKGKPSKKTLDKDSGEQDNKKDN. Positions 262–284 are enriched in basic and acidic residues; that stretch reads DKGKPSKKTLDKDSGEQDNKKDN.

The protein belongs to the TMEM38 family. In terms of assembly, homotrimer; conformation seems to be controled by binding to diacylglycerol (DAG).

The protein localises to the endoplasmic reticulum membrane. The enzyme catalyses K(+)(in) = K(+)(out). Channel activity is activated by increased cytosolic Ca(2+) levels and blocked by luminal high Ca(2+) levels. Functionally, intracellular monovalent cation channel required for maintenance of rapid intracellular calcium release. Acts as a potassium counter-ion channel that functions in synchronization with calcium release from intracellular stores. Activated by increased cytosolic Ca(2+) levels. The chain is Trimeric intracellular cation channel type B (tmem38b) from Xenopus tropicalis (Western clawed frog).